The following is a 283-amino-acid chain: 4-diphosphocytidyl-2-C-methyl-D-erythritol kinase (283 aa).

The active site involves K10. Residue 99-109 (PMGGGLGGGSS) participates in ATP binding. Residue D141 is part of the active site.

The protein belongs to the GHMP kinase family. IspE subfamily. As to quaternary structure, homodimer.

It carries out the reaction 4-CDP-2-C-methyl-D-erythritol + ATP = 4-CDP-2-C-methyl-D-erythritol 2-phosphate + ADP + H(+). It participates in isoprenoid biosynthesis; isopentenyl diphosphate biosynthesis via DXP pathway; isopentenyl diphosphate from 1-deoxy-D-xylulose 5-phosphate: step 3/6. Catalyzes the phosphorylation of the position 2 hydroxy group of 4-diphosphocytidyl-2C-methyl-D-erythritol. This chain is 4-diphosphocytidyl-2-C-methyl-D-erythritol kinase, found in Salmonella paratyphi C (strain RKS4594).